The sequence spans 433 residues: 3-phosphoshikimate 1-carboxyvinyltransferase (433 aa).

3-phosphoshikimate contacts are provided by K15, S16, and R20. Residue K15 coordinates phosphoenolpyruvate. Phosphoenolpyruvate-binding residues include G96 and R124. The 3-phosphoshikimate site is built by S169, Q171, S195, D318, and K345. Q171 is a binding site for phosphoenolpyruvate. The active-site Proton acceptor is the D318. Residues R349 and R393 each coordinate phosphoenolpyruvate.

Belongs to the EPSP synthase family. Monomer.

The protein resides in the cytoplasm. It carries out the reaction 3-phosphoshikimate + phosphoenolpyruvate = 5-O-(1-carboxyvinyl)-3-phosphoshikimate + phosphate. The protein operates within metabolic intermediate biosynthesis; chorismate biosynthesis; chorismate from D-erythrose 4-phosphate and phosphoenolpyruvate: step 6/7. Catalyzes the transfer of the enolpyruvyl moiety of phosphoenolpyruvate (PEP) to the 5-hydroxyl of shikimate-3-phosphate (S3P) to produce enolpyruvyl shikimate-3-phosphate and inorganic phosphate. The sequence is that of 3-phosphoshikimate 1-carboxyvinyltransferase from Chlorobium luteolum (strain DSM 273 / BCRC 81028 / 2530) (Pelodictyon luteolum).